The primary structure comprises 1053 residues: LRR receptor-like serine/threonine-protein kinase GHR1 (1053 aa).

Positions 1–18 (MNLSRILLLSMFFLSAMG) are cleaved as a signal peptide. Residues 19-630 (QLPSQDIMAL…NKSTNKLVKV (612 aa)) are Extracellular-facing. LRR repeat units lie at residues 73–93 (GVVLDNLGLTADADFSLFSNL), 94–119 (TKLVKLSMSNNSLSGVLPNDLGSFKS), 121–141 (QFLDLSDNLFSSSLPKEIGRS), 142–165 (VSLRNLSLSGNNFSGEIPESMGGL), 166–189 (ISLQSLDMSSNSLSGPLPKSLTRL), 191–212 (DLLYLNLSSNGFTGKMPRGFEL), 213–237 (ISSLEVLDLHGNSIDGNLDGEFFLL), 239–260 (NASYVDISGNRLVTTSGKLLPG), 262–285 (SESIKHLNLSHNQLEGSLTSGFQL), 286–309 (FQNLKVLDLSYNMLSGELPGFNYV), 310–333 (YDLEVLKLSNNRFSGSLPNNLLKG), 335–357 (SLLLTTLDLSGNNLSGPVSSIMS), and 358–384 (TTLHTLDLSSNSLTGELPLLTGGCVLL). N-linked (GlcNAc...) asparagine glycosylation is present at asparagine 92. A phosphoserine; by HT1 mark is found at serine 100 and serine 102. Asparagine 103 carries N-linked (GlcNAc...) asparagine glycosylation. Phosphoserine; by HT1 occurs at positions 105 and 126. N-linked (GlcNAc...) asparagine glycosylation is found at asparagine 146 and asparagine 153. Residue asparagine 196 is glycosylated (N-linked (GlcNAc...) asparagine). A glycan (N-linked (GlcNAc...) asparagine) is linked at asparagine 239. Position 262 is a phosphoserine; by HT1 (serine 262). An N-linked (GlcNAc...) asparagine glycan is attached at asparagine 269. The residue at position 278 (serine 278) is a Phosphoserine; by HT1. Position 280 is a phosphothreonine; by HT1 (threonine 280). Serine 281 carries the phosphoserine; by HT1 modification. Phosphoserine; by HT1 is present on serine 325. N-linked (GlcNAc...) asparagine glycosylation occurs at asparagine 347. An N-linked (GlcNAc...) asparagine glycan is attached at asparagine 394. LRR repeat units lie at residues 401-425 (WENIEYLDLSQNHFTGSFPDATPQL), 426-449 (LRANHLNLSYNKLTGSLPERIPTH), 450-474 (YPKLRVLDISSNSLEGPIPGALLSM), 476-498 (TLEEIHLQNNGMTGNIGPLPSSG), 499-521 (SRIRLLDLSHNRFDGDLPGVFGS), 522-546 (LTNLQVLNLAANNLSGSLPSSMNDI), 548-570 (SLSSLDVSQNHFTGPLPSNLSSN), and 572-592 (MAFNVSYNDLSGTVPENLKNF). Tyrosine 406 is modified (phosphotyrosine; by HT1). Serine 410 bears the Phosphoserine; by HT1 mark. Threonine 415 is modified (phosphothreonine; by HT1). At serine 417 the chain carries Phosphoserine; by HT1. The N-linked (GlcNAc...) asparagine glycan is linked to asparagine 432. The residue at position 434 (serine 434) is a Phosphoserine; by HT1. Residues asparagine 534, asparagine 566, and asparagine 575 are each glycosylated (N-linked (GlcNAc...) asparagine). 3 positions are modified to phosphoserine; by HT1: serine 613, serine 614, and serine 616. Asparagine 621 carries N-linked (GlcNAc...) asparagine glycosylation. The helical transmembrane segment at 631–651 (VIIVSCAVALIILILVAILLF) threads the bilayer. Residues 652-1053 (CICKSRRREE…KTIYEDLSSI (402 aa)) are Cytoplasmic-facing. Basic and acidic residues predominate over residues 662–671 (RSITGKETNR). The disordered stretch occupies residues 662-684 (RSITGKETNRRAQTIPSGSGGGM). A phosphothreonine; by HT1 mark is found at threonine 669 and threonine 675. Phosphoserine; by HT1 occurs at positions 678, 680, 698, 699, and 700. Serine 704 is modified (phosphoserine). Threonine 713 bears the Phosphothreonine; by HT1 mark. Phosphoserine; by HT1 occurs at positions 716 and 718. At threonine 720 the chain carries Phosphothreonine; by HT1. Phosphoserine; by HT1 occurs at positions 721, 724, and 760. Threonine 764 is modified (phosphothreonine; by HT1). At serine 769 the chain carries Phosphoserine; by HT1. The region spanning 770–1053 (RAPAEVLGRS…KTIYEDLSSI (284 aa)) is the Protein kinase domain. ATP contacts are provided by residues 776-784 (LGRSSHGTS) and lysine 798. 2 positions are modified to phosphothreonine; by HT1: threonine 928 and threonine 1010. The residue at position 1015 (serine 1015) is a Phosphoserine; by HT1. A Phosphothreonine; by HT1 modification is found at threonine 1045. Tyrosine 1047 carries the post-translational modification Phosphotyrosine; by HT1. Serine 1051 and serine 1052 each carry phosphoserine; by HT1.

It belongs to the protein kinase superfamily. Ser/Thr protein kinase family. In terms of assembly, interacts with SLAC1 (via N-terminus). Binds to ABI2, but not ABI1. Interacts with CPK3. Phosphorylated by HT1; this phosphorylation is inhibited by MPK12 and MPK4. As to expression, expressed in guard cells and in the vasculature of roots and leaves.

It localises to the cell membrane. It catalyses the reaction L-seryl-[protein] + ATP = O-phospho-L-seryl-[protein] + ADP + H(+). The catalysed reaction is L-threonyl-[protein] + ATP = O-phospho-L-threonyl-[protein] + ADP + H(+). Negatively regulated by ABI2. Receptor kinase acting as an early component in abscisic acid (ABA) signaling. Required for darkness, ABA, high CO(2) and hydrogen peroxide (H(2)O(2)) induction of S-type anion currents in guard cells leading to stomatal closure, possibly via the phosphorylation and activation of the anion channel SLAC1 and as a scaffolding component. Seems to act in parallel with SRK2E/OST1 in the ABA signaling pathway which regulates stomatal movement. Binds ATP. Involved in the local and/or systemic stomatal responses (e.g. stomatal closure) to light stress. In Arabidopsis thaliana (Mouse-ear cress), this protein is LRR receptor-like serine/threonine-protein kinase GHR1.